The sequence spans 128 residues: Large ribosomal subunit protein bL12 (128 aa).

Belongs to the bacterial ribosomal protein bL12 family. As to quaternary structure, homodimer. Part of the ribosomal stalk of the 50S ribosomal subunit. Forms a multimeric L10(L12)X complex, where L10 forms an elongated spine to which 2 to 4 L12 dimers bind in a sequential fashion. Binds GTP-bound translation factors.

In terms of biological role, forms part of the ribosomal stalk which helps the ribosome interact with GTP-bound translation factors. Is thus essential for accurate translation. This Corynebacterium glutamicum (strain R) protein is Large ribosomal subunit protein bL12.